Here is a 248-residue protein sequence, read N- to C-terminus: Tryptophan synthase alpha chain (248 aa).

Catalysis depends on proton acceptor residues Glu-36 and Asp-47.

The protein belongs to the TrpA family. As to quaternary structure, tetramer of two alpha and two beta chains.

It catalyses the reaction (1S,2R)-1-C-(indol-3-yl)glycerol 3-phosphate + L-serine = D-glyceraldehyde 3-phosphate + L-tryptophan + H2O. It participates in amino-acid biosynthesis; L-tryptophan biosynthesis; L-tryptophan from chorismate: step 5/5. The alpha subunit is responsible for the aldol cleavage of indoleglycerol phosphate to indole and glyceraldehyde 3-phosphate. The sequence is that of Tryptophan synthase alpha chain from Pyrococcus furiosus (strain ATCC 43587 / DSM 3638 / JCM 8422 / Vc1).